Here is a 232-residue protein sequence, read N- to C-terminus: Platelet-activating factor acetylhydrolase IB subunit alpha1 (232 aa).

Residues 1–20 (MSGEGENPASKPTPVQDVQG) form a disordered region. The residue at position 2 (S2) is an N-acetylserine. Position 2 is a phosphoserine (S2). Catalysis depends on residues S48, D193, and H196.

It belongs to the 'GDSL' lipolytic enzyme family. Platelet-activating factor acetylhydrolase IB beta/gamma subunits subfamily. In terms of assembly, forms a catalytic dimer which is either homodimer (alpha1/alpha1 homodimer) or heterodimer with PAFAH1B2 (alpha1/alpha2 heterodimer). Component of the cytosolic (PAF-AH (I)) heterotetrameric enzyme, which is composed of PAFAH1B1 (beta), PAFAH1B2 (alpha2) and PAFAH1B3 (alpha1) subunits. The catalytic activity of the enzyme resides in the alpha1 (PAFAH1B3) and alpha2 (PAFAH1B2) subunits, whereas the beta subunit (PAFAH1B1) has regulatory activity. Trimer formation is not essential for the catalytic activity. Interacts with VLDLR; this interaction may modulate the Reelin pathway.

The protein localises to the cytoplasm. The catalysed reaction is a 1-O-alkyl-2-acetyl-sn-glycero-3-phosphocholine + H2O = a 1-O-alkyl-sn-glycero-3-phosphocholine + acetate + H(+). The enzyme catalyses 1-O-hexadecyl-2-acetyl-sn-glycero-3-phosphocholine + H2O = 1-O-hexadecyl-sn-glycero-3-phosphocholine + acetate + H(+). It catalyses the reaction 1-O-hexadecyl-2-acetyl-sn-glycero-3-phosphate + H2O = 1-O-hexadecyl-sn-glycero-3-phosphate + acetate + H(+). Beta subunit (PAFAH1B1) inhibits the acetylhydrolase activity of the alpha1/alpha1 catalytic homodimer. Alpha1 catalytic subunit of the cytosolic type I platelet-activating factor (PAF) acetylhydrolase (PAF-AH (I)) heterotetrameric enzyme that catalyzes the hydrolyze of the acetyl group at the sn-2 position of PAF and its analogs and modulates the action of PAF. The activity and substrate specificity of PAF-AH (I) are affected by its subunit composition. Both alpha1/alpha1 homodimer (PAFAH1B3/PAFAH1B3 homodimer) and alpha1/alpha2 heterodimer(PAFAH1B3/PAFAH1B2 heterodimer) hydrolyze 1-O-alkyl-2-acetyl-sn-glycero-3-phosphoric acid (AAGPA) more efficiently than PAF, but they have little hydrolytic activity towards 1-O-alkyl-2-acetyl-sn-glycero-3-phosphorylethanolamine (AAGPE). Plays an important role during the development of brain. The polypeptide is Platelet-activating factor acetylhydrolase IB subunit alpha1 (Mus musculus (Mouse)).